Here is a 604-residue protein sequence, read N- to C-terminus: 3-hydroxy-3-methylglutaryl-coenzyme A reductase 2 (604 aa).

2 helical membrane passes run 47–67 and 91–111; these read LPLY…MYFL and AIVS…IGFV. Positions 112–188 are linker; the sequence is QTFVARGNND…APLVTPAASE (77 aa). Residue Asn120 is glycosylated (N-linked (GlcNAc...) asparagine). The catalytic stretch occupies residues 189-604; it reads EDEEIIKSVV…STKDVTKASS (416 aa). Residue Glu283 is the Charge relay system of the active site. Asn347 carries N-linked (GlcNAc...) asparagine glycosylation. Catalysis depends on Lys415, which acts as the Charge relay system. Asn460 carries an N-linked (GlcNAc...) asparagine glycan. Asp491 serves as the catalytic Charge relay system. The Proton donor role is filled by His589. Asn593 is a glycosylation site (N-linked (GlcNAc...) asparagine).

It belongs to the HMG-CoA reductase family.

The protein localises to the endoplasmic reticulum membrane. The enzyme catalyses (R)-mevalonate + 2 NADP(+) + CoA = (3S)-3-hydroxy-3-methylglutaryl-CoA + 2 NADPH + 2 H(+). Its pathway is metabolic intermediate biosynthesis; (R)-mevalonate biosynthesis; (R)-mevalonate from acetyl-CoA: step 3/3. Its function is as follows. Catalyzes the synthesis of mevalonate. The specific precursor of all isoprenoid compounds present in plants. This is 3-hydroxy-3-methylglutaryl-coenzyme A reductase 2 (HMGR2) from Capsicum annuum (Capsicum pepper).